The chain runs to 278 residues: MAATKRAACLIGCPAAHSRSPLIHHYWLRQLGIEGGYSIEAVPPEGFAEFVLHLKTHGYVGANVTIPHKERALQLTEPDERACAVGAANTLYYDGDLLRSTNTDIEGFIGNLDASAPGWDRSAHALVLGAGGSSRAVVFGLLERGVQRIALANRSIERAQALRDLFGERVVPIAWSDIPAALPGAGLLVNTTSLGMKGQPPLQIDLSALPADAVVSDLVYVPLETDLLAAAKARGLRTADGLGMLLHQAVRGFDLWFGARPHVTPELRALVEADLAPK.

Shikimate contacts are provided by residues serine 18–serine 20 and threonine 65. Lysine 69 acts as the Proton acceptor in catalysis. Glutamate 80 is an NADP(+) binding site. Residues asparagine 89 and aspartate 104 each coordinate shikimate. NADP(+) contacts are provided by residues glycine 129 to serine 133 and leucine 218. Tyrosine 220 contributes to the shikimate binding site. An NADP(+)-binding site is contributed by glycine 241.

It belongs to the shikimate dehydrogenase family. As to quaternary structure, homodimer.

The catalysed reaction is shikimate + NADP(+) = 3-dehydroshikimate + NADPH + H(+). The protein operates within metabolic intermediate biosynthesis; chorismate biosynthesis; chorismate from D-erythrose 4-phosphate and phosphoenolpyruvate: step 4/7. Functionally, involved in the biosynthesis of the chorismate, which leads to the biosynthesis of aromatic amino acids. Catalyzes the reversible NADPH linked reduction of 3-dehydroshikimate (DHSA) to yield shikimate (SA). The protein is Shikimate dehydrogenase (NADP(+)) of Rhodopseudomonas palustris (strain ATCC BAA-98 / CGA009).